The sequence spans 173 residues: uncharacterized protein (173 aa).

4 consecutive transmembrane segments (helical) span residues 9-29, 32-52, 100-120, and 127-147; these read FSIC…LLCV, ICSA…TFFH, MFLC…SFIV, and FLFL…GLYP.

The protein resides in the membrane. This is an uncharacterized protein from Saccharomyces cerevisiae (strain ATCC 204508 / S288c) (Baker's yeast).